We begin with the raw amino-acid sequence, 649 residues long: tRNA-guanine(15) transglycosylase (649 aa).

Residue Asp-88 is the Nucleophile of the active site. Substrate contacts are provided by Asp-123 and Ala-194. Zn(2+) contacts are provided by Cys-280, Cys-282, and Cys-285. A PUA domain is found at 573–648 (KYRIVIDSSV…VAATLRGGLK (76 aa)).

The protein belongs to the archaeosine tRNA-ribosyltransferase family. Requires Zn(2+) as cofactor.

The enzyme catalyses guanosine(15) in tRNA + 7-cyano-7-deazaguanine = 7-cyano-7-carbaguanosine(15) in tRNA + guanine. It participates in tRNA modification; archaeosine-tRNA biosynthesis. Exchanges the guanine residue with 7-cyano-7-deazaguanine (preQ0) at position 15 in the dihydrouridine loop (D-loop) of archaeal tRNAs. The polypeptide is tRNA-guanine(15) transglycosylase (Methanococcus maripaludis (strain DSM 14266 / JCM 13030 / NBRC 101832 / S2 / LL)).